We begin with the raw amino-acid sequence, 263 residues long: Tryptophan synthase alpha chain (263 aa).

Active-site proton acceptor residues include Glu51 and Asp62.

Belongs to the TrpA family. Tetramer of two alpha and two beta chains.

The enzyme catalyses (1S,2R)-1-C-(indol-3-yl)glycerol 3-phosphate + L-serine = D-glyceraldehyde 3-phosphate + L-tryptophan + H2O. It participates in amino-acid biosynthesis; L-tryptophan biosynthesis; L-tryptophan from chorismate: step 5/5. Its function is as follows. The alpha subunit is responsible for the aldol cleavage of indoleglycerol phosphate to indole and glyceraldehyde 3-phosphate. In Methanosarcina barkeri (strain Fusaro / DSM 804), this protein is Tryptophan synthase alpha chain.